A 65-amino-acid chain; its full sequence is Toxin Cbo5 (65 aa).

In terms of domain architecture, LCN-type CS-alpha/beta spans 2–65 (KDGYLVDKTG…QTWPLPNKSC (64 aa)). 4 disulfides stabilise this stretch: cysteine 12-cysteine 65, cysteine 16-cysteine 41, cysteine 25-cysteine 46, and cysteine 29-cysteine 48.

The protein belongs to the long (4 C-C) scorpion toxin superfamily. Sodium channel inhibitor family. Beta subfamily. Expressed by the venom gland.

The protein resides in the secreted. Functionally, a probable toxin that has no activity on the tested sodium channels (when tested at 200 nM) and is not toxic to mice, crickets or sweet water shrimps. It resembles Beta toxins that bind voltage-independently at site-4 of sodium channels and shift the voltage of activation toward more negative potentials, thereby affecting sodium channel activation and promoting spontaneous and repetitive firing. This Centruroides bonito (Scorpion) protein is Toxin Cbo5.